We begin with the raw amino-acid sequence, 1032 residues long: Connector enhancer of kinase suppressor of ras 2 (1032 aa).

Positions 11 to 76 (WSPSQVVDWM…LEAVDLLCAL (66 aa)) constitute an SAM domain. Phosphoserine is present on S12. Residues 84 to 178 (NLKTLSHKLN…TIVQQDCTVY (95 aa)) enclose the CRIC domain. The PDZ domain maps to 215–297 (VIQLANIKPS…GVILTLKKRP (83 aa)). Residues 302–515 (TSAPALLKNM…PAHYSLLPSL (214 aa)) form the DUF1170 domain. The segment covering 324-340 (RSPTSSVATPSSTISTP) has biased composition (low complexity). A disordered region spans residues 324 to 349 (RSPTSSVATPSSTISTPTKRDSSALQ). Phosphoserine occurs at positions 338 and 390. Disordered stretches follow at residues 480–509 (EEYM…PAHY) and 538–558 (FQQS…ISGK). Positions 545–558 (HKSKKKNKGAISGK) are enriched in basic residues. One can recognise a PH domain in the interval 570–669 (RGDCEGWLWK…WLNRINMLTA (100 aa)). The disordered stretch occupies residues 682–766 (DYWSESDKEE…PIRKTASQRR (85 aa)). Y683 is modified (phosphotyrosine). The segment covering 683 to 693 (YWSESDKEEAD) has biased composition (acidic residues). A phosphoserine mark is found at S685 and S687. Pro residues predominate over residues 701-714 (DSPPPPYDTYPRPP). Residues 730–740 (LSSTETSQSQS) are compositionally biased toward low complexity. Phosphoserine occurs at positions 756 and 767. The segment at 864–900 (ACDPQDDIQPPEVEEEEEEEEEEAAGENVGEKNENRE) is disordered. A coiled-coil region spans residues 874-917 (PEVEEEEEEEEEEAAGENVGEKNENREEKLGDSLQDLYRALEEA). Acidic residues predominate over residues 875 to 888 (EVEEEEEEEEEEAA). S906 bears the Phosphoserine mark.

The protein belongs to the CNKSR family. In terms of assembly, interacts with RAF1, RAB2L and RAL GTPase proteins. Post-translationally, phosphorylated on tyrosine.

It localises to the cytoplasm. The protein resides in the membrane. May function as an adapter protein or regulator of Ras signaling pathways. This Mus musculus (Mouse) protein is Connector enhancer of kinase suppressor of ras 2 (Cnksr2).